The sequence spans 482 residues: tRNA sulfurtransferase (482 aa).

The THUMP domain occupies 61 to 165 (QQVLEILTTT…DDKLNQILAH (105 aa)). Residues 183-184 (LI), Lys265, Gly287, and Gln296 contribute to the ATP site. Cys344 and Cys456 are joined by a disulfide. The 79-residue stretch at 404–482 (IEEHAVVLDI…GFNNVKVYRP (79 aa)) folds into the Rhodanese domain. Cys456 acts as the Cysteine persulfide intermediate in catalysis.

Belongs to the ThiI family.

Its subcellular location is the cytoplasm. It catalyses the reaction [ThiI sulfur-carrier protein]-S-sulfanyl-L-cysteine + a uridine in tRNA + 2 reduced [2Fe-2S]-[ferredoxin] + ATP + H(+) = [ThiI sulfur-carrier protein]-L-cysteine + a 4-thiouridine in tRNA + 2 oxidized [2Fe-2S]-[ferredoxin] + AMP + diphosphate. It carries out the reaction [ThiS sulfur-carrier protein]-C-terminal Gly-Gly-AMP + S-sulfanyl-L-cysteinyl-[cysteine desulfurase] + AH2 = [ThiS sulfur-carrier protein]-C-terminal-Gly-aminoethanethioate + L-cysteinyl-[cysteine desulfurase] + A + AMP + 2 H(+). The protein operates within cofactor biosynthesis; thiamine diphosphate biosynthesis. Its function is as follows. Catalyzes the ATP-dependent transfer of a sulfur to tRNA to produce 4-thiouridine in position 8 of tRNAs, which functions as a near-UV photosensor. Also catalyzes the transfer of sulfur to the sulfur carrier protein ThiS, forming ThiS-thiocarboxylate. This is a step in the synthesis of thiazole, in the thiamine biosynthesis pathway. The sulfur is donated as persulfide by IscS. The chain is tRNA sulfurtransferase from Vibrio vulnificus (strain CMCP6).